We begin with the raw amino-acid sequence, 236 residues long: Thylakoid lumenal 17.4 kDa protein, chloroplastic (236 aa).

2 consecutive Pentapeptide repeat domains span residues 124 to 163 and 169 to 208; these read TNLK…SFKG and AVID…VFED.

In terms of assembly, interacts in vitro with LTO1.

The protein resides in the plastid. It is found in the chloroplast thylakoid lumen. In Arabidopsis thaliana (Mouse-ear cress), this protein is Thylakoid lumenal 17.4 kDa protein, chloroplastic.